The primary structure comprises 1109 residues: Protein translocase subunit SecA (1109 aa).

ATP-binding positions include Q175, 193 to 197 (GEGKT), and D695. Residues 1038–1109 (VRQAAPEQRQ…KYKNCHGRNS (72 aa)) are disordered. 2 stretches are compositionally biased toward basic and acidic residues: residues 1045–1059 (QRQDMSKYREQKQDL) and 1071–1088 (DTREAVKREPIRAEKTVG). The Zn(2+) site is built by C1093, C1095, C1104, and H1105. The segment covering 1099-1109 (KKYKNCHGRNS) has biased composition (basic residues).

The protein belongs to the SecA family. In terms of assembly, monomer and homodimer. Part of the essential Sec protein translocation apparatus which comprises SecA, SecYEG and auxiliary proteins SecDF. Other proteins may also be involved. It depends on Zn(2+) as a cofactor.

Its subcellular location is the cell inner membrane. The protein resides in the cytoplasm. The catalysed reaction is ATP + H2O + cellular proteinSide 1 = ADP + phosphate + cellular proteinSide 2.. In terms of biological role, part of the Sec protein translocase complex. Interacts with the SecYEG preprotein conducting channel. Has a central role in coupling the hydrolysis of ATP to the transfer of proteins into and across the cell membrane, serving as an ATP-driven molecular motor driving the stepwise translocation of polypeptide chains across the membrane. The protein is Protein translocase subunit SecA of Bacteroides fragilis (strain ATCC 25285 / DSM 2151 / CCUG 4856 / JCM 11019 / LMG 10263 / NCTC 9343 / Onslow / VPI 2553 / EN-2).